Consider the following 183-residue polypeptide: Large ribosomal subunit protein eL18 (183 aa).

Residues 146–183 form a disordered region; the sequence is HFGPAPGVPHSHTKPYVRSKGRKFEKARGRRKSRGFRV. 2 stretches are compositionally biased toward basic residues: residues 156–166 and 173–183; these read SHTKPYVRSKG and RGRRKSRGFRV.

It belongs to the eukaryotic ribosomal protein eL18 family.

The polypeptide is Large ribosomal subunit protein eL18 (RPL18) (Cicer arietinum (Chickpea)).